The sequence spans 67 residues: Large ribosomal subunit protein uL29 (67 aa).

The protein belongs to the universal ribosomal protein uL29 family.

This is Large ribosomal subunit protein uL29 from Agathobacter rectalis (strain ATCC 33656 / DSM 3377 / JCM 17463 / KCTC 5835 / VPI 0990) (Eubacterium rectale).